A 296-amino-acid chain; its full sequence is MSPDLTHRSPEELTPEDSQAIGDLARRAARADGVDPLNEESLLALRHRTPGRVHVLAHDQDRLVGYGTLAHGSAEVVTDPDARKAGLGGRLLDALLEHDPELLLWAHGDMDGGRRLAASRGMVPRRPLWRMERPVAGEFSELPPVELPEGISVRPFVAGQDDEAWLRVNSRAFADHAEQGRMTAEDLTARTQEDWFDASGFLLLVDDTRDGEVVGFHWTKVDQLPVGEVYVVGVDPERQGEGLGRVATLVGLHHLADRGVETVELYVDGDNRAAVTTYGRLGFERAAVDVQYGPPV.

N-acetyltransferase domains follow at residues 8 to 146 (RSPE…PPVE) and 151 to 296 (ISVR…GPPV). Position 39 (glutamate 39) interacts with 1D-myo-inositol 2-(L-cysteinylamino)-2-deoxy-alpha-D-glucopyranoside. 76 to 78 (VVT) contributes to the acetyl-CoA binding site. Residues glutamate 178, lysine 220, and glutamate 228 each contribute to the 1D-myo-inositol 2-(L-cysteinylamino)-2-deoxy-alpha-D-glucopyranoside site. Acetyl-CoA is bound by residues 232 to 234 (VGV) and 239 to 245 (QGEGLGR). Tyrosine 266 provides a ligand contact to 1D-myo-inositol 2-(L-cysteinylamino)-2-deoxy-alpha-D-glucopyranoside.

The protein belongs to the acetyltransferase family. MshD subfamily. In terms of assembly, monomer.

The catalysed reaction is 1D-myo-inositol 2-(L-cysteinylamino)-2-deoxy-alpha-D-glucopyranoside + acetyl-CoA = mycothiol + CoA + H(+). Functionally, catalyzes the transfer of acetyl from acetyl-CoA to desacetylmycothiol (Cys-GlcN-Ins) to form mycothiol. The chain is Mycothiol acetyltransferase from Kytococcus sedentarius (strain ATCC 14392 / DSM 20547 / JCM 11482 / CCUG 33030 / NBRC 15357 / NCTC 11040 / CCM 314 / 541) (Micrococcus sedentarius).